A 387-amino-acid polypeptide reads, in one-letter code: Phosphoglycerate kinase (387 aa).

Substrate-binding positions include 21-23, R36, 59-62, R113, and R146; these read DLN and HLGR. Residues K197, E314, and 340-343 contribute to the ATP site; that span reads GGDT.

This sequence belongs to the phosphoglycerate kinase family. Monomer.

Its subcellular location is the cytoplasm. It catalyses the reaction (2R)-3-phosphoglycerate + ATP = (2R)-3-phospho-glyceroyl phosphate + ADP. It functions in the pathway carbohydrate degradation; glycolysis; pyruvate from D-glyceraldehyde 3-phosphate: step 2/5. In Pseudomonas aeruginosa (strain ATCC 15692 / DSM 22644 / CIP 104116 / JCM 14847 / LMG 12228 / 1C / PRS 101 / PAO1), this protein is Phosphoglycerate kinase.